The sequence spans 213 residues: MELQLAIDLLNKEDAAELANKVKDHVDIVEIGTPIVINEGLPAVQHLNDNVDGVKVLADLKIMDAADYEVSQAVKFGADIVTILGVAEDASIKAAVDEAHKHGKQLLVDMIAVQDLEKRAKDLDDLGADYIAVHTGYDLQAEGQSPLESLRKVKSVISNSKVAVAGGIKPDTIKDIVAENPDLIIVGGGIANADDPVEAAKQCRDIVDAHTKA.

It belongs to the HPS/KGPDC family. HPS subfamily.

It carries out the reaction D-ribulose 5-phosphate + formaldehyde = D-arabino-hex-3-ulose 6-phosphate. It participates in one-carbon metabolism; formaldehyde assimilation via RuMP pathway; D-fructose 6-phosphate from D-ribulose 5-phosphate and formaldehyde: step 1/2. In terms of biological role, catalyzes the condensation of ribulose 5-phosphate with formaldehyde to form 3-hexulose 6-phosphate. The protein is 3-hexulose-6-phosphate synthase 2 of Staphylococcus saprophyticus subsp. saprophyticus (strain ATCC 15305 / DSM 20229 / NCIMB 8711 / NCTC 7292 / S-41).